Consider the following 261-residue polypeptide: Endonuclease NucS (261 aa).

This sequence belongs to the NucS endonuclease family.

It is found in the cytoplasm. Cleaves both 3' and 5' ssDNA extremities of branched DNA structures. The chain is Endonuclease NucS from Aeropyrum pernix (strain ATCC 700893 / DSM 11879 / JCM 9820 / NBRC 100138 / K1).